The following is a 303-amino-acid chain: Kynurenine formamidase (303 aa).

Positions 95-99 (HGGYW) match the HGGXW motif. Residue Ser164 is the Nucleophile of the active site. Residues Asp247 and His279 contribute to the active site.

Belongs to the kynurenine formamidase family. As to quaternary structure, homodimer.

It localises to the cytoplasm. Its subcellular location is the cytosol. The protein resides in the nucleus. It catalyses the reaction N-formyl-L-kynurenine + H2O = L-kynurenine + formate + H(+). The protein operates within amino-acid degradation; L-tryptophan degradation via kynurenine pathway; L-kynurenine from L-tryptophan: step 2/2. Functionally, catalyzes the hydrolysis of N-formyl-L-kynurenine to L-kynurenine, the second step in the kynurenine pathway of tryptophan degradation. Kynurenine may be further oxidized to nicotinic acid, NAD(H) and NADP(H). Required for elimination of toxic metabolites. In Homo sapiens (Human), this protein is Kynurenine formamidase.